The primary structure comprises 271 residues: DNA-directed RNA polymerase subunit Rpo3 (271 aa).

Belongs to the archaeal Rpo3/eukaryotic RPB3 RNA polymerase subunit family. As to quaternary structure, part of the RNA polymerase complex.

It is found in the cytoplasm. It carries out the reaction RNA(n) + a ribonucleoside 5'-triphosphate = RNA(n+1) + diphosphate. Its function is as follows. DNA-dependent RNA polymerase (RNAP) catalyzes the transcription of DNA into RNA using the four ribonucleoside triphosphates as substrates. In Thermoplasma volcanium (strain ATCC 51530 / DSM 4299 / JCM 9571 / NBRC 15438 / GSS1), this protein is DNA-directed RNA polymerase subunit Rpo3.